Reading from the N-terminus, the 231-residue chain is Superoxide dismutase [Mn], mitochondrial (231 aa).

The N-terminal 27 residues, 1 to 27 (MALRTLASRKTLAAAALPLAAAAAARG), are a transit peptide targeting the mitochondrion. Mn(2+) is bound by residues histidine 55, histidine 103, aspartate 192, and histidine 196.

The protein belongs to the iron/manganese superoxide dismutase family. Homotetramer. Mn(2+) serves as cofactor.

Its subcellular location is the mitochondrion matrix. The enzyme catalyses 2 superoxide + 2 H(+) = H2O2 + O2. Functionally, destroys superoxide anion radicals which are normally produced within the cells and which are toxic to biological systems. The sequence is that of Superoxide dismutase [Mn], mitochondrial (SODA) from Oryza sativa subsp. japonica (Rice).